A 304-amino-acid chain; its full sequence is Dihydroorotate dehydrogenase B (NAD(+)), catalytic subunit (304 aa).

Residues S21 and 45 to 46 (KA) contribute to the FMN site. Residues K45 and 69–73 (NAIGL) each bind substrate. 2 residues coordinate FMN: N99 and N127. A substrate-binding site is contributed by N127. C130 acts as the Nucleophile in catalysis. FMN contacts are provided by K165 and I191. Substrate is bound at residue 192–193 (NT). Residues G217, 243–244 (GG), and 265–266 (GT) each bind FMN.

The protein belongs to the dihydroorotate dehydrogenase family. Type 1 subfamily. Heterotetramer of 2 PyrK and 2 PyrD type B subunits. It depends on FMN as a cofactor.

It localises to the cytoplasm. The catalysed reaction is (S)-dihydroorotate + NAD(+) = orotate + NADH + H(+). It functions in the pathway pyrimidine metabolism; UMP biosynthesis via de novo pathway; orotate from (S)-dihydroorotate (NAD(+) route): step 1/1. In terms of biological role, catalyzes the conversion of dihydroorotate to orotate with NAD(+) as electron acceptor. The polypeptide is Dihydroorotate dehydrogenase B (NAD(+)), catalytic subunit (pyrD) (Listeria innocua serovar 6a (strain ATCC BAA-680 / CLIP 11262)).